A 106-amino-acid polypeptide reads, in one-letter code: Guanylate cyclase activator 2B (106 aa).

Positions 1 to 21 (MSRSQLWAAVVLLLLLQSAQG) are cleaved as a signal peptide. A propeptide spanning residues 22–91 (VYIKYHGFQV…STFKALRTIA (70 aa)) is cleaved from the precursor. 3 disulfides stabilise this stretch: C62–C75, C95–C103, and C98–C106.

Belongs to the guanylin family. As to expression, localized predominantly in intestinal villi and the corticomedullary junction of the kidney.

The protein localises to the secreted. Functionally, endogenous activator of intestinal guanylate cyclase. It stimulates this enzyme through the same receptor binding region as the heat-stable enterotoxins. May be a potent physiological regulator of intestinal fluid and electrolyte transport. May be an autocrine/paracrine regulator of intestinal salt and water transport. This is Guanylate cyclase activator 2B (Guca2b) from Mus musculus (Mouse).